A 220-amino-acid chain; its full sequence is uncharacterized protein (220 aa).

This is an uncharacterized protein from Mycoplasma pneumoniae (strain ATCC 29342 / M129 / Subtype 1) (Mycoplasmoides pneumoniae).